Here is a 216-residue protein sequence, read N- to C-terminus: Large ribosomal subunit protein bL25 (216 aa).

2 disordered regions span residues 1–21 and 192–216; these read MAET…GAVR and SADN…GKED. A compositionally biased stretch (basic and acidic residues) spans 195 to 216; that stretch reads NEAKTEEAGEDKSEEKSSGKED.

It belongs to the bacterial ribosomal protein bL25 family. CTC subfamily. As to quaternary structure, part of the 50S ribosomal subunit; part of the 5S rRNA/L5/L18/L25 subcomplex. Contacts the 5S rRNA. Binds to the 5S rRNA independently of L5 and L18.

This is one of the proteins that binds to the 5S RNA in the ribosome where it forms part of the central protuberance. This chain is Large ribosomal subunit protein bL25, found in Parvibaculum lavamentivorans (strain DS-1 / DSM 13023 / NCIMB 13966).